The following is a 354-amino-acid chain: D-alanine--D-alanine ligase (354 aa).

The region spanning 133–338 is the ATP-grasp domain; that stretch reads KHLFAQAGLP…YSDLIEQLVE (206 aa). Residue 166-221 participates in ATP binding; sequence EKELGYPCFVKPANLGSSVGISKCRNREELEKAFELAFEYDRKIVVEEGIAGREIE. Residues aspartate 292, glutamate 305, and asparagine 307 each contribute to the Mg(2+) site.

This sequence belongs to the D-alanine--D-alanine ligase family. Mg(2+) serves as cofactor. Requires Mn(2+) as cofactor.

It localises to the cytoplasm. The catalysed reaction is 2 D-alanine + ATP = D-alanyl-D-alanine + ADP + phosphate + H(+). Its pathway is cell wall biogenesis; peptidoglycan biosynthesis. In terms of biological role, cell wall formation. This is D-alanine--D-alanine ligase from Bacillus velezensis (strain DSM 23117 / BGSC 10A6 / LMG 26770 / FZB42) (Bacillus amyloliquefaciens subsp. plantarum).